The primary structure comprises 416 residues: Phosphatidylserine decarboxylase proenzyme, mitochondrial (416 aa).

The Mitochondrial matrix segment spans residues Met1–Leu67. Residues Arg68–Ser86 traverse the membrane as a helical segment. Over Trp87–Leu416 the chain is Mitochondrial intermembrane. Residues Asp198, His274, and Ser385 each act as charge relay system; for autoendoproteolytic cleavage activity in the active site. The active-site Schiff-base intermediate with substrate; via pyruvic acid; for decarboxylase activity is Ser385. Residue Ser385 is modified to Pyruvic acid (Ser); by autocatalysis.

It belongs to the phosphatidylserine decarboxylase family. PSD-B subfamily. Eukaryotic type I sub-subfamily. As to quaternary structure, heterodimer of a large membrane-associated beta subunit and a small pyruvoyl-containing alpha subunit. The cofactor is pyruvate. In terms of processing, is synthesized initially as an inactive proenzyme. Formation of the active enzyme involves a self-maturation process in which the active site pyruvoyl group is generated from an internal serine residue via an autocatalytic post-translational modification. Two non-identical subunits are generated from the proenzyme in this reaction, and the pyruvate is formed at the N-terminus of the alpha chain, which is derived from the carboxyl end of the proenzyme. The autoendoproteolytic cleavage occurs by a canonical serine protease mechanism, in which the side chain hydroxyl group of the serine supplies its oxygen atom to form the C-terminus of the beta chain, while the remainder of the serine residue undergoes an oxidative deamination to produce ammonia and the pyruvoyl prosthetic group on the alpha chain. During this reaction, the Ser that is part of the protease active site of the proenzyme becomes the pyruvoyl prosthetic group, which constitutes an essential element of the active site of the mature decarboxylase.

Its subcellular location is the mitochondrion inner membrane. It localises to the cytoplasm. The protein localises to the lipid droplet. It catalyses the reaction a 1,2-diacyl-sn-glycero-3-phospho-L-serine + H(+) = a 1,2-diacyl-sn-glycero-3-phosphoethanolamine + CO2. The protein operates within phospholipid metabolism; phosphatidylethanolamine biosynthesis. In terms of biological role, catalyzes the formation of phosphatidylethanolamine (PtdEtn) from phosphatidylserine (PtdSer). Plays a central role in phospholipid metabolism and in the interorganelle trafficking of phosphatidylserine. May be involved in lipid droplet biogenesis at the endoplasmic reticulum membrane. This chain is Phosphatidylserine decarboxylase proenzyme, mitochondrial, found in Bos taurus (Bovine).